Consider the following 377-residue polypeptide: Geranylgeranyl transferase type-1 subunit beta (377 aa).

4 PFTB repeats span residues 144-186, 193-234, 245-284, and 291-333; these read KEAC…YMLN, MKKA…CLMG, LNRI…KLLK, and FEKN…SLME. Residues 219–221 and 263–266 contribute to the geranylgeranyl diphosphate site; these read HGG and RPNK. Aspartate 269 and cysteine 271 together coordinate Zn(2+). 272-275 provides a ligand contact to geranylgeranyl diphosphate; the sequence is YSFW. Histidine 321 contacts Zn(2+).

Belongs to the protein prenyltransferase subunit beta family. As to quaternary structure, heterodimer of FNTA and PGGT1B. PGGT1B mediates interaction with substrate peptides. Zn(2+) serves as cofactor. Requires Mg(2+) as cofactor.

The catalysed reaction is geranylgeranyl diphosphate + L-cysteinyl-[protein] = S-geranylgeranyl-L-cysteinyl-[protein] + diphosphate. Catalyzes the transfer of a geranylgeranyl moiety from geranylgeranyl diphosphate to a cysteine at the fourth position from the C-terminus of proteins with the C-terminal sequence Cys-aliphatic-aliphatic-X. Known substrates include RAC1, RAC2, RAP1A and RAP1B. This chain is Geranylgeranyl transferase type-1 subunit beta (Pggt1b), found in Rattus norvegicus (Rat).